The following is a 330-amino-acid chain: ADP-L-glycero-D-manno-heptose-6-epimerase (330 aa).

Residues 11-12, 32-33, lysine 39, lysine 54, 75-79, and asparagine 92 each bind NADP(+); these read FI, DN, and EGACS. Residue tyrosine 139 is the Proton acceptor of the active site. Lysine 143 serves as a coordination point for NADP(+). Asparagine 168 is a binding site for substrate. NADP(+) contacts are provided by valine 169 and lysine 177. Lysine 177 acts as the Proton acceptor in catalysis. Substrate is bound by residues arginine 179, histidine 186, 200-203, arginine 213, and tyrosine 292; that span reads FGEY.

The protein belongs to the NAD(P)-dependent epimerase/dehydratase family. HldD subfamily. In terms of assembly, homopentamer. NADP(+) is required as a cofactor.

The enzyme catalyses ADP-D-glycero-beta-D-manno-heptose = ADP-L-glycero-beta-D-manno-heptose. It participates in nucleotide-sugar biosynthesis; ADP-L-glycero-beta-D-manno-heptose biosynthesis; ADP-L-glycero-beta-D-manno-heptose from D-glycero-beta-D-manno-heptose 7-phosphate: step 4/4. Catalyzes the interconversion between ADP-D-glycero-beta-D-manno-heptose and ADP-L-glycero-beta-D-manno-heptose via an epimerization at carbon 6 of the heptose. The sequence is that of ADP-L-glycero-D-manno-heptose-6-epimerase from Paraburkholderia xenovorans (strain LB400).